Reading from the N-terminus, the 140-residue chain is Large ribosomal subunit protein bL34m (140 aa).

It belongs to the bacterial ribosomal protein bL34 family. Component of the mitochondrial large ribosomal subunit (mt-LSU). Mature N.crassa 74S mitochondrial ribosomes consist of a small (37S) and a large (54S) subunit. The 37S small subunit contains a 16S ribosomal RNA (16S mt-rRNA) and 32 different proteins. The 54S large subunit contains a 23S rRNA (23S mt-rRNA) and 42 different proteins.

The protein resides in the mitochondrion. In terms of biological role, component of the mitochondrial ribosome (mitoribosome), a dedicated translation machinery responsible for the synthesis of mitochondrial genome-encoded proteins, including at least some of the essential transmembrane subunits of the mitochondrial respiratory chain. The mitoribosomes are attached to the mitochondrial inner membrane and translation products are cotranslationally integrated into the membrane. The polypeptide is Large ribosomal subunit protein bL34m (mrpl34) (Neurospora crassa (strain ATCC 24698 / 74-OR23-1A / CBS 708.71 / DSM 1257 / FGSC 987)).